The primary structure comprises 602 residues: Pro-neuregulin-1, membrane-bound isoform (602 aa).

The Extracellular segment spans residues 1–206; that stretch reads MWATSEGPLQ…MEAEELYQKR (206 aa). N-linked (GlcNAc...) asparagine glycosylation occurs at asparagine 21. One can recognise an Ig-like C2-type domain in the interval 29–123; the sequence is PKLKEMKNQE…DSTKASVIIT (95 aa). A disulfide bridge connects residues cysteine 49 and cysteine 105. Asparagine 113 and asparagine 126 each carry an N-linked (GlcNAc...) asparagine glycan. The EGF-like domain occupies 137 to 181; it reads HLTKCDIKQKAFCVNGGECYMVKDLPNPPRYLCRCPNEFTGDRCQ. Disulfide bonds link cysteine 141/cysteine 155, cysteine 149/cysteine 169, and cysteine 171/cysteine 180. A helical transmembrane segment spans residues 207–229; it reads VLTITGICIALLVVGIMCVVAYC. Residues 230-602 are Cytoplasmic-facing; sequence KTKKQRKKLH…VIANQDPIAV (373 aa). Disordered stretches follow at residues 293–366, 391–421, 460–479, and 486–553; these read ETSF…EGNS, MTTP…PVSS, FNSF…PSPL, and EYET…FLSI. The span at 294-314 shows a compositional bias: low complexity; the sequence is TSFSTSHYTSTTHHSMTVTQT. Residues 315–324 show a composition bias toward polar residues; sequence PSHSWSNGHT. Positions 325-341 are enriched in low complexity; that stretch reads ESILSESHSVLVSSSVE. Positions 460-474 are enriched in polar residues; sequence FNSFHNNPTHESNSL. Over residues 504 to 514 the composition is skewed to basic residues; it reads TNSRRVKRTKP. Over residues 527-536 the composition is skewed to low complexity; sequence DTSSQSTSSE.

It belongs to the neuregulin family. In terms of processing, proteolytic cleavage close to the plasma membrane on the external face leads to the release of the soluble growth factor form. Post-translationally, extensive glycosylation precedes the proteolytic cleavage.

The protein localises to the cell membrane. The protein resides in the secreted. In terms of biological role, direct ligand for the ERBB tyrosine kinase receptors. The multiple isoforms perform diverse functions: cysteine-rich domain containing isoforms (isoform 2-isoform 4) probably regulate the expression of nicotinic acetylcholine receptors at developing interneuronal synapses. Isoform Ig-NRG is required for the initial induction and/or maintenance of the mature levels of acetylcholine receptors at neuromuscular synapses. Binds to ERBB3 and integrins to form a complex which is essential for NRG1-ERBB signaling. The sequence is that of Pro-neuregulin-1, membrane-bound isoform (NRG1) from Gallus gallus (Chicken).